The sequence spans 318 residues: MKASQERSEARRTAHSVKEKKYMVMASPRKRPRDLEAEKAALWLEPSARLCLLNPPEMVTILLHHYAAEVSTSRQYRGGDFKGEPAFRFSPHLDPTVNRFIHPVSVLENPLAVSHTLLLHHGGLAMCPRFVAFTENRSKFPAAQYELFTVIFNEARVPIPQRVTEWLATLSPEEKTTVRILNWSGTTFEDQLELTERVLRSWADFSEYQLPSRHLSEFVTLKDSLRGYTDSSGHQYYHAKMDSVDETGVVYRVNLTRASIPRRFTLIVCHGTVAVTAVPVELTEDTFYKWLADDGDDGDGDDDGDDDGDDDGGDDDDE.

Positions methionine 1–tyrosine 22 are enriched in basic and acidic residues. 2 disordered regions span residues methionine 1–arginine 29 and aspartate 293–glutamate 318.

This is an uncharacterized protein from Ictalurid herpesvirus 1 (strain Auburn) (IcHV-1).